Reading from the N-terminus, the 216-residue chain is SYKVSGGLHGVGVSVVNALSSKLELTIHRAGHIHQQEYKHGDPVYPLKVIGDIETTGTTVRFWPSAETFSQTIFNVDILARRLRELSFLNAGVRIVLRDERVALEHIFDLEVGLSEKSALDIAGLPGKLADCQEKDPALSELYLVEGDSAGGSAKQGRNRKMQAILPLKGKILNVERARFDKMISSQEVGTLITALGCGIGREEYNPDKLRYHKII.

Residues 140–216 (SELYLVEGDS…PDKLRYHKII (77 aa)) form the Toprim domain.

This sequence belongs to the type II topoisomerase GyrB family. In terms of assembly, heterotetramer, composed of two GyrA and two GyrB chains. In the heterotetramer, GyrA contains the active site tyrosine that forms a transient covalent intermediate with DNA, while GyrB binds cofactors and catalyzes ATP hydrolysis.

The protein localises to the cytoplasm. It catalyses the reaction ATP-dependent breakage, passage and rejoining of double-stranded DNA.. Functionally, a type II topoisomerase that negatively supercoils closed circular double-stranded (ds) DNA in an ATP-dependent manner to modulate DNA topology and maintain chromosomes in an underwound state. Negative supercoiling favors strand separation, and DNA replication, transcription, recombination and repair, all of which involve strand separation. Also able to catalyze the interconversion of other topological isomers of dsDNA rings, including catenanes and knotted rings. Type II topoisomerases break and join 2 DNA strands simultaneously in an ATP-dependent manner. The chain is DNA gyrase subunit B (gyrB) from Acinetobacter bereziniae (Acinetobacter genomosp. 10).